The following is a 133-amino-acid chain: Adenosine 5'-monophosphoramidase hnt1 (133 aa).

Positions 4–107 (IFCKIVKGDI…IPKPNEEYGL (104 aa)) constitute an HIT domain. AMP-binding positions include 29 to 30 (DI), N81, 87 to 89 (HQF), and 94 to 96 (HFH). The Histidine triad motif motif lies at 92–96 (HVHFH). Residue H94 is the Tele-AMP-histidine intermediate of the active site.

Belongs to the HINT family. In terms of assembly, homodimer. Mg(2+) is required as a cofactor.

Its subcellular location is the nucleus. The enzyme catalyses adenosine 5'-phosphoramidate + H2O = AMP + NH4(+). Functionally, hydrolyzes adenosine 5'-monophosphoramidate substrates such as AMP-morpholidate, AMP-N-alanine methyl ester, AMP-alpha-acetyl lysine methyl ester and AMP-NH2. This chain is Adenosine 5'-monophosphoramidase hnt1 (hnt1), found in Schizosaccharomyces pombe (strain 972 / ATCC 24843) (Fission yeast).